Reading from the N-terminus, the 279-residue chain is Elongation factor Ts (279 aa).

An involved in Mg(2+) ion dislocation from EF-Tu region spans residues 80-83 (TDFV).

The protein belongs to the EF-Ts family.

It localises to the cytoplasm. Functionally, associates with the EF-Tu.GDP complex and induces the exchange of GDP to GTP. It remains bound to the aminoacyl-tRNA.EF-Tu.GTP complex up to the GTP hydrolysis stage on the ribosome. In Borreliella burgdorferi (strain ATCC 35210 / DSM 4680 / CIP 102532 / B31) (Borrelia burgdorferi), this protein is Elongation factor Ts (tsf).